Consider the following 256-residue polypeptide: Late embryogenesis abundant protein 32 (256 aa).

Positions 1–14 are enriched in basic and acidic residues; that stretch reads MSQEQPRRPREPVK. A disordered region spans residues 1–20; sequence MSQEQPRRPREPVKYGDVFE. The short motif at 5–9 is the Nuclear localization signal (NLS) element; it reads QPRRP. SMP domains follow at residues 13 to 66, 130 to 187, and 195 to 253; these read VKYG…TTNI, ITIG…HNAT, and IKLR…LNER.

This sequence belongs to the LEA type SMP family. In terms of tissue distribution, embryo specific, only in dry mature seeds. Expressed at low levels.

Its subcellular location is the cytoplasm. It localises to the nucleus. LEA proteins are late embryonic proteins abundant in higher plant seed embryos. The function of those proteins is not known. The chain is Late embryogenesis abundant protein 32 from Arabidopsis thaliana (Mouse-ear cress).